A 206-amino-acid chain; its full sequence is MQLELLNEQGQAASKVDVPETVFDRQYNEDLIHQIVVAYQANARQGTRAQKDREQVKHSTKKPFKQKGTGNARAGMTSSPLWRGGGRIFPNLPEENFSQKINKKMYRAGMASILSQLAREGRLAVVDSLKLDTPKTKVLADKFKAMNLQSVMVIADEVDENLYLASRNLKNVFVTEPRYADPVSLVHYKKVLVTKGAIDKLKEMFA.

Positions 46 to 77 are disordered; sequence GTRAQKDREQVKHSTKKPFKQKGTGNARAGMT.

The protein belongs to the universal ribosomal protein uL4 family. Part of the 50S ribosomal subunit.

Its function is as follows. One of the primary rRNA binding proteins, this protein initially binds near the 5'-end of the 23S rRNA. It is important during the early stages of 50S assembly. It makes multiple contacts with different domains of the 23S rRNA in the assembled 50S subunit and ribosome. In terms of biological role, forms part of the polypeptide exit tunnel. This Acidovorax ebreus (strain TPSY) (Diaphorobacter sp. (strain TPSY)) protein is Large ribosomal subunit protein uL4.